The chain runs to 823 residues: Hypoxia-inducible factor 1-alpha (823 aa).

The disordered stretch occupies residues 1 to 30; the sequence is MEGAGGANDKKKISSERRKEKSRDAARSRR. The interval 1–401 is interaction with TSGA10; it reads MEGAGGANDK…KEPDALTLLA (401 aa). Residues 8-30 are compositionally biased toward basic and acidic residues; it reads NDKKKISSERRKEKSRDAARSRR. A bHLH domain is found at 17–70; that stretch reads RRKEKSRDAARSRRSKESEVFYELAHQLPLPHNVSSHLDKASVMRLTISYLRVR. The segment at 21–30 is DNA-binding; it reads KSRDAARSRR. Positions 85–158 constitute a PAS 1 domain; sequence KAQMNCFYLK…THRNGLVKKG (74 aa). A required for heterodimer formation with ARNT region spans residues 170–191; sequence RMKCTLTSRGRTMNIKSATWKV. One can recognise a PAS 2 domain in the interval 228–298; the sequence is PHPSNIEIPL…KTHHDMFTKG (71 aa). S247 bears the Phosphoserine; by CK1 mark. The 44-residue stretch at 302–345 folds into the PAC domain; the sequence is TGQYRMLAKRGGYVWIETQATVIYNTKNSQPQCIVCVNYVVSGI. The ODD stretch occupies residues 401-600; that stretch reads APAAGDTIIS…QSASTNTVFQ (200 aa). 4-hydroxyproline is present on P402. The span at 494 to 517 shows a compositional bias: polar residues; it reads IQDQPASPSDGSTRQSSPEPNSPS. Positions 494-521 are disordered; that stretch reads IQDQPASPSDGSTRQSSPEPNSPSEYCF. Positions 531–575 are NTAD; the sequence is FKLELVEKLFAEDTEAKNPFSTQDTDLDLEMLAPYIPMDDDFQLR. K532 is subject to N6-acetyllysine; alternate. K532 participates in a covalent cross-link: Glycyl lysine isopeptide (Lys-Gly) (interchain with G-Cter in ubiquitin); alternate. Glycyl lysine isopeptide (Lys-Gly) (interchain with G-Cter in ubiquitin) cross-links involve residues K538 and K547. S551 carries the phosphoserine; by GSK3-beta modification. T555 is modified (phosphothreonine; by GSK3-beta). A 4-hydroxyproline modification is found at P564. Residue S576 is modified to Phosphoserine; by PLK3. The segment at 576–782 is ID; it reads SFDQLSPLEN…SDLACRLLGQ (207 aa). Disordered regions lie at residues 581-602 and 639-685; these read SPLE…FQPT and PSPP…PRSP. Phosphoserine; by GSK3-beta is present on S589. Over residues 651-666 the composition is skewed to polar residues; it reads ATTSPYSDTGSRTASP. Residue S654 is modified to Phosphoserine; by PLK3. K706 is modified (N6-acetyllysine). The Nuclear localization signal motif lies at 715–721; it reads RKRKIEH. A CTAD region spans residues 783 to 823; the sequence is SMDESGLPQLTSYDCEVNAPIQGSRNLLQGEELLRALDQVN. At C797 the chain carries S-nitrosocysteine. (3S)-3-hydroxyasparagine is present on N800.

In terms of assembly, interacts with the ARNT; forms a heterodimer that binds core DNA sequence 5'-TACGTG-3' within the hypoxia response element (HRE) of target gene promoters. Interacts with COPS5; the interaction increases the transcriptional activity of HIF1A through increased stability. Interacts with EP300 (via TAZ-type 1 domains); the interaction is stimulated in response to hypoxia and inhibited by CITED2. Interacts with CREBBP (via TAZ-type 1 domains). Interacts with NCOA1, NCOA2, APEX1 and HSP90. Interacts (hydroxylated within the ODD domain) with VHLL (via beta domain); the interaction, leads to polyubiquitination and subsequent HIF1A proteasomal degradation. During hypoxia, sumoylated HIF1A also binds VHL; the interaction promotes the ubiquitination of HIF1A. Interacts with SENP1; the interaction desumoylates HIF1A resulting in stabilization and activation of transcription. Interacts (via the ODD domain) with NAA10; the interaction appears not to acetylate HIF1A nor have any affect on protein stability, during hypoxia. Interacts with RWDD3; the interaction enhances HIF1A sumoylation. Interacts with TSGA10. Interacts with HIF3A. Interacts with RORA (via the DNA binding domain); the interaction enhances HIF1A transcription under hypoxia through increasing protein stability. Interaction with PSMA7 inhibits the transactivation activity of HIF1A under both normoxic and hypoxia-mimicking conditions. Interacts with USP20. Interacts with RACK1; promotes HIF1A ubiquitination and proteasome-mediated degradation. Interacts (via N-terminus) with USP19. Interacts with SIRT2. Interacts (deacetylated form) with EGLN1. Interacts with CBFA2T3. Interacts with HSP90AA1 and HSP90AB1. Interacts with DCUN1D1; this interaction increases the interaction between VHL and DCUN1D1. Interacts with HIF1AN. Post-translationally, S-nitrosylation of Cys-797 may be responsible for increased recruitment of p300 coactivator necessary for transcriptional activity of HIF-1 complex. Acetylation of Lys-532 by ARD1 increases interaction with VHL and stimulates subsequent proteasomal degradation. Deacetylation of Lys-706 by SIRT2 increases its interaction with and hydroxylation by EGLN1 thereby inactivating HIF1A activity by inducing its proteasomal degradation. In terms of processing, ubiquitinated; in normoxia, following hydroxylation and interaction with VHL. Lys-532 appears to be the principal site of ubiquitination. Clioquinol, the Cu/Zn-chelator, inhibits ubiquitination through preventing hydroxylation at Asn-800. Ubiquitinated by E3 ligase VHL. Deubiquitinated by UCHL1. Post-translationally, requires phosphorylation for DNA-binding. Phosphorylation at Ser-247 by CSNK1D/CK1 represses kinase activity and impairs ARNT binding. Phosphorylation by GSK3-beta and PLK3 promote degradation by the proteasome. The iron and 2-oxoglutarate dependent 3-hydroxylation of asparagine is (S) stereospecific within HIF CTAD domains. In terms of processing, sumoylated; with SUMO1 under hypoxia. Sumoylation is enhanced through interaction with RWDD3. Both sumoylation and desumoylation seem to be involved in the regulation of its stability during hypoxia. Sumoylation can promote either its stabilization or its VHL-dependent degradation by promoting hydroxyproline-independent HIF1A-VHL complex binding, thus leading to HIF1A ubiquitination and proteasomal degradation. Desumoylation by SENP1 increases its stability amd transcriptional activity. There is a disaccord between various publications on the effect of sumoylation and desumoylation on its stability and transcriptional activity. Post-translationally, in normoxia, is hydroxylated on Pro-402 and Pro-564 in the oxygen-dependent degradation domain (ODD) by EGLN1/PHD2 and EGLN2/PHD1. EGLN3/PHD3 has also been shown to hydroxylate Pro-564. The hydroxylated prolines promote interaction with VHL, initiating rapid ubiquitination and subsequent proteasomal degradation. Deubiquitinated by USP20. Under hypoxia, proline hydroxylation is impaired and ubiquitination is attenuated, resulting in stabilization. In normoxia, is hydroxylated on Asn-800 by HIF1AN, thus abrogating interaction with CREBBP and EP300 and preventing transcriptional activation. Repressed by iron ion, via Fe(2+) prolyl hydroxylase (PHD) enzymes-mediated hydroxylation and subsequent proteasomal degradation.

It localises to the cytoplasm. It is found in the nucleus. Induced by reactive oxygen species (ROS). Functions as a master transcriptional regulator of the adaptive response to hypoxia. Under hypoxic conditions, activates the transcription of over 40 genes, including erythropoietin, glucose transporters, glycolytic enzymes, vascular endothelial growth factor, HILPDA, and other genes whose protein products increase oxygen delivery or facilitate metabolic adaptation to hypoxia. Plays an essential role in embryonic vascularization, tumor angiogenesis and pathophysiology of ischemic disease. Heterodimerizes with ARNT; heterodimer binds to core DNA sequence 5'-TACGTG-3' within the hypoxia response element (HRE) of target gene promoters. Activation requires recruitment of transcriptional coactivators such as CREBBP and EP300. Activity is enhanced by interaction with NCOA1 and/or NCOA2. Interaction with redox regulatory protein APEX1 seems to activate CTAD and potentiates activation by NCOA1 and CREBBP. Involved in the axonal distribution and transport of mitochondria in neurons during hypoxia. The polypeptide is Hypoxia-inducible factor 1-alpha (HIF1A) (Bos taurus (Bovine)).